The following is an 861-amino-acid chain: DNA mismatch repair protein MutS (861 aa).

618–625 lines the ATP pocket; the sequence is GPNMGGKS.

It belongs to the DNA mismatch repair MutS family.

Functionally, this protein is involved in the repair of mismatches in DNA. It is possible that it carries out the mismatch recognition step. This protein has a weak ATPase activity. In Shewanella sp. (strain MR-4), this protein is DNA mismatch repair protein MutS.